Consider the following 364-residue polypeptide: Probable dual-specificity RNA methyltransferase RlmN (364 aa).

Residue Glu-107 is the Proton acceptor of the active site. One can recognise a Radical SAM core domain in the interval 113 to 346 (HDYGNSVCVT…ATIRREQGSD (234 aa)). The cysteines at positions 120 and 351 are disulfide-linked. Cys-127, Cys-131, and Cys-134 together coordinate [4Fe-4S] cluster. Residues 177 to 178 (GE), Ser-209, 232 to 234 (SLH), and Asn-308 contribute to the S-adenosyl-L-methionine site. Cys-351 functions as the S-methylcysteine intermediate in the catalytic mechanism.

Belongs to the radical SAM superfamily. RlmN family. Requires [4Fe-4S] cluster as cofactor.

Its subcellular location is the cytoplasm. The enzyme catalyses adenosine(2503) in 23S rRNA + 2 reduced [2Fe-2S]-[ferredoxin] + 2 S-adenosyl-L-methionine = 2-methyladenosine(2503) in 23S rRNA + 5'-deoxyadenosine + L-methionine + 2 oxidized [2Fe-2S]-[ferredoxin] + S-adenosyl-L-homocysteine. It catalyses the reaction adenosine(37) in tRNA + 2 reduced [2Fe-2S]-[ferredoxin] + 2 S-adenosyl-L-methionine = 2-methyladenosine(37) in tRNA + 5'-deoxyadenosine + L-methionine + 2 oxidized [2Fe-2S]-[ferredoxin] + S-adenosyl-L-homocysteine. Functionally, specifically methylates position 2 of adenine 2503 in 23S rRNA and position 2 of adenine 37 in tRNAs. Confers resistance to some classes of antibiotics. The chain is Probable dual-specificity RNA methyltransferase RlmN from Staphylococcus aureus (strain bovine RF122 / ET3-1).